A 380-amino-acid polypeptide reads, in one-letter code: Alcohol dehydrogenase 2 (380 aa).

Cysteine 48, threonine 50, histidine 70, cysteine 100, cysteine 103, cysteine 106, cysteine 114, and cysteine 178 together coordinate Zn(2+). An alcohol contacts are provided by threonine 50 and histidine 70. Threonine 50 contributes to the NAD(+) binding site. NAD(+) contacts are provided by residues 203–208 (GLGAVG), aspartate 227, arginine 232, threonine 273, valine 296, 296–298 (VGV), phenylalanine 323, and arginine 373.

This sequence belongs to the zinc-containing alcohol dehydrogenase family. Homodimer. Homotetramer. Zn(2+) is required as a cofactor.

It is found in the cytoplasm. The catalysed reaction is a primary alcohol + NAD(+) = an aldehyde + NADH + H(+). It carries out the reaction a secondary alcohol + NAD(+) = a ketone + NADH + H(+). In Solanum tuberosum (Potato), this protein is Alcohol dehydrogenase 2 (ADH2).